The primary structure comprises 359 residues: 3-dehydroquinate synthase (359 aa).

NAD(+) is bound by residues 71–76 (DGEAYK), 105–109 (GVIGD), 129–130 (TT), lysine 142, and lysine 151. Residues glutamate 184, histidine 247, and histidine 264 each coordinate Zn(2+).

The protein belongs to the sugar phosphate cyclases superfamily. Dehydroquinate synthase family. Co(2+) serves as cofactor. It depends on Zn(2+) as a cofactor. The cofactor is NAD(+).

It localises to the cytoplasm. The catalysed reaction is 7-phospho-2-dehydro-3-deoxy-D-arabino-heptonate = 3-dehydroquinate + phosphate. It functions in the pathway metabolic intermediate biosynthesis; chorismate biosynthesis; chorismate from D-erythrose 4-phosphate and phosphoenolpyruvate: step 2/7. In terms of biological role, catalyzes the conversion of 3-deoxy-D-arabino-heptulosonate 7-phosphate (DAHP) to dehydroquinate (DHQ). In Burkholderia mallei (strain NCTC 10247), this protein is 3-dehydroquinate synthase.